The primary structure comprises 349 residues: Dihydroorotate dehydrogenase (quinone) (349 aa).

Residues 67 to 71 and Thr91 contribute to the FMN site; that span reads AGLDK. Lys71 serves as a coordination point for substrate. 116-120 serves as a coordination point for substrate; it reads NRLGF. FMN contacts are provided by Asn147 and Asn180. Asn180 is a substrate binding site. Ser183 functions as the Nucleophile in the catalytic mechanism. Asn185 is a substrate binding site. FMN is bound by residues Lys225 and Thr253. 254-255 lines the substrate pocket; the sequence is NT. FMN contacts are provided by residues Gly276, Gly305, and 326–327; that span reads YT.

Belongs to the dihydroorotate dehydrogenase family. Type 2 subfamily. As to quaternary structure, monomer. FMN is required as a cofactor.

The protein localises to the cell membrane. The enzyme catalyses (S)-dihydroorotate + a quinone = orotate + a quinol. It participates in pyrimidine metabolism; UMP biosynthesis via de novo pathway; orotate from (S)-dihydroorotate (quinone route): step 1/1. Functionally, catalyzes the conversion of dihydroorotate to orotate with quinone as electron acceptor. The protein is Dihydroorotate dehydrogenase (quinone) of Bordetella pertussis (strain Tohama I / ATCC BAA-589 / NCTC 13251).